A 161-amino-acid chain; its full sequence is Endoribonuclease YbeY (161 aa).

3 residues coordinate Zn(2+): histidine 121, histidine 125, and histidine 131.

The protein belongs to the endoribonuclease YbeY family. Zn(2+) is required as a cofactor.

The protein localises to the cytoplasm. In terms of biological role, single strand-specific metallo-endoribonuclease involved in late-stage 70S ribosome quality control and in maturation of the 3' terminus of the 16S rRNA. The sequence is that of Endoribonuclease YbeY from Bordetella avium (strain 197N).